The chain runs to 491 residues: Probable cytosol aminopeptidase (491 aa).

Mn(2+)-binding residues include Lys-261 and Asp-266. Lys-273 is a catalytic residue. Asp-284, Asp-343, and Glu-345 together coordinate Mn(2+). Arg-347 is an active-site residue.

Belongs to the peptidase M17 family. The cofactor is Mn(2+).

The protein localises to the cytoplasm. The catalysed reaction is Release of an N-terminal amino acid, Xaa-|-Yaa-, in which Xaa is preferably Leu, but may be other amino acids including Pro although not Arg or Lys, and Yaa may be Pro. Amino acid amides and methyl esters are also readily hydrolyzed, but rates on arylamides are exceedingly low.. It carries out the reaction Release of an N-terminal amino acid, preferentially leucine, but not glutamic or aspartic acids.. Functionally, presumably involved in the processing and regular turnover of intracellular proteins. Catalyzes the removal of unsubstituted N-terminal amino acids from various peptides. This chain is Probable cytosol aminopeptidase, found in Stenotrophomonas maltophilia (strain K279a).